The primary structure comprises 103 residues: Histone H4 (103 aa).

At Lys6 the chain carries N6-acetyl-N6-methyllysine; alternate. 3 positions are modified to N6-methyllysine; alternate: Lys6, Lys9, and Lys13. Lys13 is subject to N6-acetyl-N6-methyllysine; alternate. The DNA-binding element occupies 17-21 (KRHRK). At Lys92 the chain carries N6-glutaryllysine.

This sequence belongs to the histone H4 family. In terms of assembly, the nucleosome is a histone octamer containing two molecules each of H2A, H2B, H3 and H4 assembled in one H3-H4 heterotetramer and two H2A-H2B heterodimers. The octamer wraps approximately 147 bp of DNA. Post-translationally, glutarylation at Lys-92 (H4K91glu) destabilizes nucleosomes by promoting dissociation of the H2A-H2B dimers from nucleosomes.

Its subcellular location is the nucleus. It localises to the chromosome. Its function is as follows. Core component of nucleosome. Nucleosomes wrap and compact DNA into chromatin, limiting DNA accessibility to the cellular machineries which require DNA as a template. Histones thereby play a central role in transcription regulation, DNA repair, DNA replication and chromosomal stability. DNA accessibility is regulated via a complex set of post-translational modifications of histones, also called histone code, and nucleosome remodeling. The sequence is that of Histone H4 (H4.1) from Mortierella alpina (Oleaginous fungus).